We begin with the raw amino-acid sequence, 282 residues long: Type 1 encapsulin shell protein (282 aa).

Belongs to the encapsulin family. Family 1 subfamily. As to quaternary structure, initially thought to form a 180 subunit shell. Forms hollow shells composed of 240 subunits, making a shell about 42-43 nm in diameter. The monomer is capable of assuming 4 different conformations which allows packaging into the icosahedron. The shell has 12 pentameric and 30 hexameric capsomers which form the vertices and faces of the icosahedral nanocompartment.

The protein resides in the encapsulin nanocompartment. Its function is as follows. Shell component of a type 1 encapsulin nanocompartment. Assembles into proteinaceous icosahedral shells 42-43 nm in diameter with an iron- and phosphorus-rich core (1Fe:1.1P) which can store over 23,000-35,000 iron atoms (with a calculated maximum of 83,000 Fe). There are 2 types of negatively charged open pores in the cryo-electron structure; a 3-fold pore where 3 hexamers meet with a minimal size of 7.2 Angstroms and a 5-fold pore where pentamers meet with a minimal size of 2.3 Angstroms. The 2-fold pore seen in other encapsulin nanocompartments is closed. Empty compartments can be generated in E.coli. Both types of pore have extra density in their centers in the structure. 2 different cargo proteins have been identified (IMEF and Fer); when both are expressed in E.coli with the shell protein only IMEF is detected within the nanocompartment. E.coli expressing all 3 genes stores the largest amount of iron and is protected from Fe/H2O2-induced oxidative stress. Part of the iron-mineralizing encapsulin-associated Firmicute (IMEF) system. The chain is Type 1 encapsulin shell protein from Bacillus thermotolerans (Quasibacillus thermotolerans).